The primary structure comprises 268 residues: Unknown seed protein 30.1 (268 aa).

The signal sequence occupies residues 1-22; that stretch reads MEFAHLTVLSLFCLAFVGITAT. The BURP domain occupies 68–259; the sequence is LFFEHDLHPR…GNKAAAWVPN (192 aa).

This chain is Unknown seed protein 30.1, found in Vicia faba (Broad bean).